Consider the following 101-residue polypeptide: Putative regulatory protein PrgT (101 aa).

Functionally, might be involved in the expression of prgA, but is not required for activation of the expression of prgB. This is Putative regulatory protein PrgT (prgT) from Enterococcus faecalis (strain ATCC 47077 / OG1RF).